A 178-amino-acid polypeptide reads, in one-letter code: Endothelin-2 (178 aa).

A signal peptide spans 1–24 (MPAPGVHHPNTASPFLKTVAAGKG). Residues 25–46 (QVAAAPEHPAPSARARGSHLRP) constitute a propeptide that is removed on maturation. Disulfide bonds link Cys-49–Cys-63 and Cys-51–Cys-59. A propeptide spanning residues 70–178 (VNTPGQTAPY…RPTHPRRRKR (109 aa)) is cleaved from the precursor. An endothelin-like region spans residues 96 to 111 (CECSSGGDPACATFCH). The tract at residues 156 to 178 (RFPRRPQEAGRQLRPTHPRRRKR) is disordered. Residues 169–178 (RPTHPRRRKR) are compositionally biased toward basic residues.

The protein belongs to the endothelin/sarafotoxin family.

The protein localises to the secreted. In terms of biological role, endothelins are endothelium-derived vasoconstrictor peptides. This is Endothelin-2 (EDN2) from Canis lupus familiaris (Dog).